A 116-amino-acid chain; its full sequence is U30-theraphotoxin-Cg1a (116 aa).

The N-terminal stretch at 1–17 is a signal peptide; sequence MKLCVLTIASLLVTVTS. The propeptide occupies 18 to 53; that stretch reads LETQKEIAEGSELTREETPSLVEHKEDEAAAASEKR. The interval 24-46 is disordered; that stretch reads IAEGSELTREETPSLVEHKEDEA. Disulfide bonds link Cys55/Cys69, Cys62/Cys75, Cys66/Cys112, and Cys68/Cys88.

The protein belongs to the neurotoxin 03 (Tx2) family. 02 subfamily. HNTX-XV sub-subfamily. As to expression, expressed by the venom gland.

The protein resides in the secreted. Its function is as follows. Probable ion channel inhibitor. This Chilobrachys guangxiensis (Chinese earth tiger tarantula) protein is U30-theraphotoxin-Cg1a.